We begin with the raw amino-acid sequence, 185 residues long: Elongation factor P (185 aa).

The protein belongs to the elongation factor P family.

Its subcellular location is the cytoplasm. The protein operates within protein biosynthesis; polypeptide chain elongation. Functionally, involved in peptide bond synthesis. Stimulates efficient translation and peptide-bond synthesis on native or reconstituted 70S ribosomes in vitro. Probably functions indirectly by altering the affinity of the ribosome for aminoacyl-tRNA, thus increasing their reactivity as acceptors for peptidyl transferase. This chain is Elongation factor P, found in Salinispora arenicola (strain CNS-205).